A 444-amino-acid polypeptide reads, in one-letter code: Ribulose bisphosphate carboxylase large chain (444 aa).

Lys7 carries the N6,N6,N6-trimethyllysine modification. The substrate site is built by Asn116 and Thr166. Lys168 (proton acceptor) is an active-site residue. Residue Lys170 coordinates substrate. 3 residues coordinate Mg(2+): Lys194, Asp196, and Glu197. Lys194 carries the post-translational modification N6-carboxylysine. The active-site Proton acceptor is His287. Arg288, His320, and Ser372 together coordinate substrate.

Belongs to the RuBisCO large chain family. Type I subfamily. In terms of assembly, heterohexadecamer of 8 large chains and 8 small chains; disulfide-linked. The disulfide link is formed within the large subunit homodimers. Mg(2+) is required as a cofactor. Post-translationally, the disulfide bond which can form in the large chain dimeric partners within the hexadecamer appears to be associated with oxidative stress and protein turnover.

It localises to the plastid. The protein resides in the chloroplast. It catalyses the reaction 2 (2R)-3-phosphoglycerate + 2 H(+) = D-ribulose 1,5-bisphosphate + CO2 + H2O. It carries out the reaction D-ribulose 1,5-bisphosphate + O2 = 2-phosphoglycolate + (2R)-3-phosphoglycerate + 2 H(+). RuBisCO catalyzes two reactions: the carboxylation of D-ribulose 1,5-bisphosphate, the primary event in carbon dioxide fixation, as well as the oxidative fragmentation of the pentose substrate in the photorespiration process. Both reactions occur simultaneously and in competition at the same active site. The protein is Ribulose bisphosphate carboxylase large chain of Watsonia angusta.